The primary structure comprises 578 residues: L-2,3-diaminopropanoate--citrate ligase (578 aa).

It belongs to the IucA/IucC family. Forms a mixture of monomer and dimer in solution.

It catalyses the reaction (S)-2,3-diaminopropanoate + citrate + ATP = 2-[(L-alanin-3-ylcarbamoyl)methyl]-2-hydroxybutanedioate + AMP + diphosphate. It participates in siderophore biosynthesis. Its function is as follows. Catalyzes the synthesis of citryl-L-2,3-diaminopropionic acid from L-2,3-diaminopropionic acid (L-Dap) and citrate, the first step in staphyloferrin B biosynthesis. This chain is L-2,3-diaminopropanoate--citrate ligase, found in Staphylococcus aureus (strain NCTC 8325 / PS 47).